Here is a 258-residue protein sequence, read N- to C-terminus: Phosphoribosylformylglycinamidine synthase subunit PurQ (258 aa).

The Glutamine amidotransferase type-1 domain occupies 7-238 (IGILLMEGTN…QAMYLETEKD (232 aa)). C97 serves as the catalytic Nucleophile. Residues H220 and E222 contribute to the active site.

As to quaternary structure, part of the FGAM synthase complex composed of 1 PurL, 1 PurQ and 2 PurS subunits.

The protein localises to the cytoplasm. The catalysed reaction is N(2)-formyl-N(1)-(5-phospho-beta-D-ribosyl)glycinamide + L-glutamine + ATP + H2O = 2-formamido-N(1)-(5-O-phospho-beta-D-ribosyl)acetamidine + L-glutamate + ADP + phosphate + H(+). The enzyme catalyses L-glutamine + H2O = L-glutamate + NH4(+). It participates in purine metabolism; IMP biosynthesis via de novo pathway; 5-amino-1-(5-phospho-D-ribosyl)imidazole from N(2)-formyl-N(1)-(5-phospho-D-ribosyl)glycinamide: step 1/2. Functionally, part of the phosphoribosylformylglycinamidine synthase complex involved in the purines biosynthetic pathway. Catalyzes the ATP-dependent conversion of formylglycinamide ribonucleotide (FGAR) and glutamine to yield formylglycinamidine ribonucleotide (FGAM) and glutamate. The FGAM synthase complex is composed of three subunits. PurQ produces an ammonia molecule by converting glutamine to glutamate. PurL transfers the ammonia molecule to FGAR to form FGAM in an ATP-dependent manner. PurS interacts with PurQ and PurL and is thought to assist in the transfer of the ammonia molecule from PurQ to PurL. The protein is Phosphoribosylformylglycinamidine synthase subunit PurQ of Thermoplasma volcanium (strain ATCC 51530 / DSM 4299 / JCM 9571 / NBRC 15438 / GSS1).